The following is a 221-amino-acid chain: Histone H1.3 (221 aa).

The segment covering 1–17 (MSETAPVAPAAPAPAEK) has biased composition (low complexity). Residues 1–42 (MSETAPVAPAAPAPAEKTPVKKKAKKSGVAAGKRKASGPPVS) are disordered. At serine 2 the chain carries N-acetylserine. Serine 2 carries the phosphoserine modification. N6-acetyllysine is present on lysine 17. Threonine 18 carries the post-translational modification Phosphothreonine. Basic residues predominate over residues 20–36 (VKKKAKKSGVAAGKRKA). 2 positions are modified to N6-(beta-hydroxybutyryl)lysine: lysine 35 and lysine 53. The 74-residue stretch at 37-110 (SGPPVSELIT…GASGSFKLNK (74 aa)) folds into the H15 domain. Arginine 55 is modified (citrulline). An N6-(beta-hydroxybutyryl)lysine mark is found at lysine 65, lysine 86, and lysine 91. The interval 87–221 (SLVSKGTLVQ…KAKKAVSKKK (135 aa)) is disordered. Position 105 is a phosphoserine; by PKC (serine 105). Lysine 107 is subject to N6-(beta-hydroxybutyryl)lysine. 4 stretches are compositionally biased toward basic residues: residues 120-141 (KGKK…KPKK), 150-161 (KAAKKTPKKVKK), 170-187 (KVAK…KKPT), and 194-221 (KAPK…SKKK).

It belongs to the histone H1/H5 family. In terms of processing, H1 histones are progressively phosphorylated during the cell cycle, becoming maximally phosphorylated during late G2 phase and M phase, and being dephosphorylated sharply thereafter. Citrullination at Arg-55 (H1R54ci) by PADI4 takes place within the DNA-binding site of H1 and results in its displacement from chromatin and global chromatin decondensation, thereby promoting pluripotency and stem cell maintenance.

It is found in the nucleus. The protein resides in the chromosome. H1 histones bind to linker DNA between nucleosomes forming the macromolecular structure known as the chromatin fiber. H1 histones are necessary for the condensation of nucleosome chains into higher-order structured fibers. Also acts as a regulator of individual gene transcription through chromatin remodeling, nucleosome spacing and DNA methylation. The sequence is that of Histone H1.3 from Bos taurus (Bovine).